Reading from the N-terminus, the 77-residue chain is MSRVCQVTGKGPVTGNNISHANNKTRRRFLPNLQHHRFWVEEEKRFVRLRVSAKGMRIIDKRGISVVLAELRRDGKV.

The disordered stretch occupies residues 1–20; sequence MSRVCQVTGKGPVTGNNISH.

This sequence belongs to the bacterial ribosomal protein bL28 family.

This Pseudomonas fluorescens (strain Pf0-1) protein is Large ribosomal subunit protein bL28.